Consider the following 431-residue polypeptide: Serine--tRNA ligase (431 aa).

238-240 provides a ligand contact to L-serine; that stretch reads TAE. 269-271 lines the ATP pocket; sequence RSE. L-serine is bound at residue Glu292. 356–359 serves as a coordination point for ATP; that stretch reads EISS. Ser392 lines the L-serine pocket.

This sequence belongs to the class-II aminoacyl-tRNA synthetase family. Type-1 seryl-tRNA synthetase subfamily. In terms of assembly, homodimer. The tRNA molecule binds across the dimer.

The protein localises to the cytoplasm. It carries out the reaction tRNA(Ser) + L-serine + ATP = L-seryl-tRNA(Ser) + AMP + diphosphate + H(+). The enzyme catalyses tRNA(Sec) + L-serine + ATP = L-seryl-tRNA(Sec) + AMP + diphosphate + H(+). It functions in the pathway aminoacyl-tRNA biosynthesis; selenocysteinyl-tRNA(Sec) biosynthesis; L-seryl-tRNA(Sec) from L-serine and tRNA(Sec): step 1/1. Functionally, catalyzes the attachment of serine to tRNA(Ser). Is also able to aminoacylate tRNA(Sec) with serine, to form the misacylated tRNA L-seryl-tRNA(Sec), which will be further converted into selenocysteinyl-tRNA(Sec). The sequence is that of Serine--tRNA ligase from Pectobacterium carotovorum subsp. carotovorum (strain PC1).